A 435-amino-acid polypeptide reads, in one-letter code: ATP-dependent protease ATPase subunit HslU (435 aa).

ATP is bound by residues isoleucine 18, 60 to 65 (GVGKTE), aspartate 248, glutamate 313, and arginine 385.

It belongs to the ClpX chaperone family. HslU subfamily. In terms of assembly, a double ring-shaped homohexamer of HslV is capped on each side by a ring-shaped HslU homohexamer. The assembly of the HslU/HslV complex is dependent on binding of ATP.

It is found in the cytoplasm. ATPase subunit of a proteasome-like degradation complex; this subunit has chaperone activity. The binding of ATP and its subsequent hydrolysis by HslU are essential for unfolding of protein substrates subsequently hydrolyzed by HslV. HslU recognizes the N-terminal part of its protein substrates and unfolds these before they are guided to HslV for hydrolysis. The polypeptide is ATP-dependent protease ATPase subunit HslU (Agrobacterium fabrum (strain C58 / ATCC 33970) (Agrobacterium tumefaciens (strain C58))).